We begin with the raw amino-acid sequence, 581 residues long: Solute carrier family 15 member 3 (581 aa).

Residues 1 to 14 show a composition bias toward basic and acidic residues; that stretch reads MPAPRAREQPRVPG. Positions 1-26 are disordered; sequence MPAPRAREQPRVPGERQPLLPRGARG. A helical membrane pass occupies residues 38–58; sequence VLLVEMLERAAFFGVTANLVL. Residues asparagine 61 and asparagine 66 are each glycosylated (N-linked (GlcNAc...) asparagine). Transmembrane regions (helical) follow at residues 76–96, 103–123, and 155–175; these read ALVFLGASYLLAPVGGWLADV, AVALSLLLYLAASGLLPATAF, and PYCAPVLYAGLLLLGLAASSV. An N-linked (GlcNAc...) asparagine glycan is attached at asparagine 178. The helical transmembrane segment at 200–220 threads the bilayer; that stretch reads NWFYWSINLGAVLSLLVVAFI. The N-linked (GlcNAc...) asparagine glycan is linked to asparagine 223. Transmembrane regions (helical) follow at residues 232–252 and 310–330; these read IPVGCVGLAFFIFLFATPVFI and FQVLVKILPVMVTLVPYWMVY. The N-linked (GlcNAc...) asparagine glycan is linked to asparagine 356. The next 2 membrane-spanning stretches (helical) occupy residues 369-389 and 411-431; these read TIPEAWLLLANVVVVLILVPL and MALGMFFGFTSVIVAGVLEME. N-linked (GlcNAc...) asparagine glycosylation occurs at asparagine 439. 3 helical membrane passes run 458–478, 497–517, and 540–560; these read IWWQIPQYLLIGISEIFASIP, GIFFCLSGVGSLLGSSLVALL, and LYFFLLAGIQAVTALLFVWIA.

This sequence belongs to the major facilitator superfamily. Proton-dependent oligopeptide transporter (POT/PTR) (TC 2.A.17) family.

The protein resides in the lysosome membrane. It localises to the endosome membrane. It carries out the reaction glycylglycylglycine(out) + n H(+)(out) = glycylglycylglycine(in) + n H(+)(in). It catalyses the reaction carnosine(out) + n H(+)(out) = carnosine(in) + n H(+)(in). The catalysed reaction is L-histidine(out) + n H(+)(out) = L-histidine(in) + n H(+)(in). The enzyme catalyses N-acetyl-D-muramoyl-L-alanyl-D-isoglutamine(out) + n H(+)(out) = N-acetyl-D-muramoyl-L-alanyl-D-isoglutamine(in) + n H(+)(in). Its function is as follows. Proton-coupled amino-acid transporter that transports free histidine and certain di- and tripeptides, and is involved in innate immune response. Also able to transport carnosine. Involved in the detection of microbial pathogens by toll-like receptors (TLRs) and NOD-like receptors (NLRs), probably by mediating transport of bacterial peptidoglycans across the endolysosomal membrane: catalyzes the transport of certain bacterial peptidoglycans, such as muramyl dipeptide (MDP), the NOD2 ligand. The chain is Solute carrier family 15 member 3 from Homo sapiens (Human).